We begin with the raw amino-acid sequence, 575 residues long: Epsin-1 (575 aa).

A 1,2-diacyl-sn-glycero-3-phospho-(1D-myo-inositol-4,5-bisphosphate) is bound by residues Lys-11, Arg-25, Asn-30, Arg-63, and His-73. The region spanning Asn-12–Arg-144 is the ENTH domain. A disordered region spans residues Thr-150–Leu-186. Low complexity predominate over residues Thr-157–Ser-167. UIM domains lie at Glu-183–Pro-202, Glu-208–Glu-227, and Gly-233–Lys-252. Positions Phe-264–Leu-575 are disordered. 8 consecutive repeat copies span residues Asp-274–Trp-276, Asp-294–Trp-296, Asp-306–Trp-308, Asp-319–Trp-321, Asp-332–Trp-334, Asp-349–Trp-351, Asp-367–Trp-369, and Asp-377–Trp-379. Residues Asp-274–Trp-379 form an 8 X 3 AA repeats of D-P-W region. 2 stretches are compositionally biased toward low complexity: residues Pro-279–Pro-299 and Asp-306–Ala-316. Residues Asp-332–Pro-346 show a composition bias toward low complexity. The segment covering Asp-367–Trp-379 has biased composition (low complexity). Phosphoserine is present on Ser-382. Positions Asp-401 to Arg-410 match the [DE]-X(1,2)-F-X-X-[FL]-X-X-X-R motif motif. Ser-418 and Ser-419 each carry phosphoserine. Thr-420 is subject to Phosphothreonine. Phosphoserine occurs at positions 434, 446, and 453. A compositionally biased stretch (pro residues) spans Ser-453 to Arg-467. 3 positions are modified to phosphothreonine: Thr-459, Thr-463, and Thr-469. Ser-472 is subject to Phosphoserine. Thr-493 is modified (phosphothreonine). A run of 2 repeats spans residues Asn-501–Phe-503 and Asn-517–Phe-519. Residues Asn-501–Phe-573 are 3 X 3 AA repeats of N-P-F. The residue at position 533 (Arg-533) is an Omega-N-methylarginine. Positions Gly-556–Asn-569 are enriched in pro residues. The stretch at Asn-571–Phe-573 is repeat 3.

Belongs to the epsin family. As to quaternary structure, monomer. Binds clathrin and ZBTB16/ZNF145. Binds ubiquitinated proteins. Interacts with RALBP1 in a complex also containing NUMB and TFAP2A during interphase and mitosis. Interacts with AP2B1. Interacts with UBQLN2. Interacts with ITSN1. Interacts with AP2A1 and AP2A2. Interacts with REPS2; the interaction is direct. Interacts with EPS15; the interaction is direct. Interacts with ENTREP1. In terms of processing, phosphorylated on serine and/or threonine residues in mitotic cells. Phosphorylation reduces interaction with REPS2, AP-2 and the membrane fraction. Depolarization of synaptosomes results in dephosphorylation. Post-translationally, ubiquitinated.

It localises to the cytoplasm. The protein localises to the cell membrane. It is found in the nucleus. Its subcellular location is the membrane. The protein resides in the clathrin-coated pit. Its function is as follows. Binds to membranes enriched in phosphatidylinositol 4,5-bisphosphate (PtdIns(4,5)P2). Modifies membrane curvature and facilitates the formation of clathrin-coated invaginations. Regulates receptor-mediated endocytosis. This is Epsin-1 (Epn1) from Mus musculus (Mouse).